A 154-amino-acid chain; its full sequence is Small ribosomal subunit protein uS19B (154 aa).

A Phosphoserine modification is found at serine 63.

Belongs to the universal ribosomal protein uS19 family. As to quaternary structure, component of the small ribosomal subunit (SSU). Mature yeast ribosomes consist of a small (40S) and a large (60S) subunit. The 40S small subunit contains 1 molecule of ribosomal RNA (18S rRNA) and at least 33 different proteins. The large 60S subunit contains 3 rRNA molecules (25S, 5.8S and 5S rRNA) and at least 46 different proteins.

The protein localises to the cytoplasm. Its subcellular location is the nucleus. The protein resides in the nucleolus. Component of the ribosome, a large ribonucleoprotein complex responsible for the synthesis of proteins in the cell. The small ribosomal subunit (SSU) binds messenger RNAs (mRNAs) and translates the encoded message by selecting cognate aminoacyl-transfer RNA (tRNA) molecules. The large subunit (LSU) contains the ribosomal catalytic site termed the peptidyl transferase center (PTC), which catalyzes the formation of peptide bonds, thereby polymerizing the amino acids delivered by tRNAs into a polypeptide chain. The nascent polypeptides leave the ribosome through a tunnel in the LSU and interact with protein factors that function in enzymatic processing, targeting, and the membrane insertion of nascent chains at the exit of the ribosomal tunnel. uS19 is involved in the nuclear export of the small ribosomal subunit precursor. Has a role in the late stage of the assembly of pre-40S particles within the nucleus and controls their export to the cytoplasm. This Schizosaccharomyces pombe (strain 972 / ATCC 24843) (Fission yeast) protein is Small ribosomal subunit protein uS19B (rps1502).